The chain runs to 328 residues: DNA repair and recombination protein RadA (328 aa).

118–125 (GEYGSGKT) contacts ATP.

The protein belongs to the eukaryotic RecA-like protein family.

Its function is as follows. Involved in DNA repair and in homologous recombination. Binds and assemble on single-stranded DNA to form a nucleoprotein filament. Hydrolyzes ATP in a ssDNA-dependent manner and promotes DNA strand exchange between homologous DNA molecules. The protein is DNA repair and recombination protein RadA of Desulfurococcus amylolyticus (strain DSM 18924 / JCM 16383 / VKM B-2413 / 1221n) (Desulfurococcus kamchatkensis).